We begin with the raw amino-acid sequence, 228 residues long: Putative lipoprotein LprH (228 aa).

Positions 1–27 are cleaved as a signal peptide; it reads MACLGRPGCRGWAGASLVLVVVLALAA. The N-palmitoyl cysteine moiety is linked to residue C28. C28 is lipidated: S-diacylglycerol cysteine. The chain crosses the membrane as a helical span at residues 191-211; it reads GLAVVPHAVLVLSACGFKPGF.

Its subcellular location is the cell membrane. The sequence is that of Putative lipoprotein LprH (lprH) from Mycobacterium bovis (strain ATCC BAA-935 / AF2122/97).